The sequence spans 371 residues: MPLSLFRRVLLAVLLLVIIWTLFGPSGLGEELLSLSLASLLPAPASPGPPLALPRLLISNSHACGGSGPPPFLLILVCTAPEHLNQRNAIRASWGAIREARGFRVQTLFLLGKPRRQQLADLSSESAAHRDILQASFQDSYRNLTLKTLSGLNWVNKYCPMARYILKTDDDVYVNVPELVSELIQRGGPSEQWQKGKEAQEETTAIHEEHRGQAVPLLYLGRVHWRVRPTRTPESRHHVSEELWPENWGPFPPYASGTGYVLSISAVQLILKVASRAPPLPLEDVFVGVSARRGGLAPTHCVKLAGATHYPLDRCCYGKFLLTSHKVDPWQMQEAWKLVSGMNGERTAPFCSWLQGFLGTLRCRFIAWFSS.

At 1–4 the chain is on the cytoplasmic side; it reads MPLS. Residues 5–25 traverse the membrane as a helical; Signal-anchor for type II membrane protein segment; sequence LFRRVLLAVLLLVIIWTLFGP. Residues 26 to 371 lie on the Lumenal side of the membrane; that stretch reads SGLGEELLSL…RCRFIAWFSS (346 aa). Residue asparagine 143 is glycosylated (N-linked (GlcNAc...) asparagine).

It belongs to the glycosyltransferase 31 family. Expressed in heart, brain, spleen, kidney, lung and testis.

It localises to the golgi apparatus membrane. The enzyme catalyses a ganglioside GM2 (d18:1(4E)) + UDP-alpha-D-galactose = a ganglioside GM1 (d18:1(4E)) + UDP + H(+). It catalyses the reaction a ganglioside GM2 + UDP-alpha-D-galactose = a ganglioside GM1 + UDP + H(+). The catalysed reaction is a ganglioside GD2 (d18:1(4E)) + UDP-alpha-D-galactose = a ganglioside GD1b (d18:1(4E)) + UDP + H(+). It carries out the reaction a ganglioside GA2 (d18:1(4E)) + UDP-alpha-D-galactose = a ganglioside GA1 (d18:1(4E)) + UDP + H(+). It participates in protein modification; protein glycosylation. Its function is as follows. Involved in GM1/GD1B/GA1 ganglioside biosynthesis. This is Beta-1,3-galactosyltransferase 4 from Mus musculus (Mouse).